Reading from the N-terminus, the 366-residue chain is Galactoside alpha-(1,2)-fucosyltransferase 1 (366 aa).

Over 1 to 8 (MWPRSHRH) the chain is Cytoplasmic. The chain crosses the membrane as a helical; Signal-anchor for type II membrane protein span at residues 9–25 (LCLAFLLVCVLSAISFL). Residues 26–366 (IHFHQDSIRH…LSPLWPLAEP (341 aa)) lie on the Lumenal side of the membrane. 3 N-linked (GlcNAc...) asparagine glycosylation sites follow: Asn-66, Asn-302, and Asn-328.

It belongs to the glycosyltransferase 11 family.

Its subcellular location is the golgi apparatus. It localises to the golgi stack membrane. The catalysed reaction is a beta-D-galactosyl-(1-&gt;4)-N-acetyl-beta-D-glucosaminyl derivative + GDP-beta-L-fucose = an alpha-L-Fuc-(1-&gt;2)-beta-D-Gal-(1-&gt;4)-beta-D-GlcNAc derivative + GDP + H(+). The enzyme catalyses a ganglioside GA1 + GDP-beta-L-fucose = a ganglioside Fuc-GA1 + GDP + H(+). It carries out the reaction a beta-D-Gal-(1-&gt;3)-beta-D-GlcNAc-(1-&gt;3)-beta-D-Gal-(1-&gt;4)-beta-D-Glc-(1&lt;-&gt;1')-Cer(d18:1(4E)) + GDP-beta-L-fucose = alpha-L-fucosyl-(1-&gt;2)- beta-D-galactosyl-(1-&gt;3)-N-acetyl-beta-D-glucosaminyl-(1-&gt;3)-beta-D-galactosyl-(1-&gt;4)-beta-D-glucosyl-(1&lt;-&gt;1')-N-acylsphing-4-enine + GDP + H(+). It catalyses the reaction a neolactoside nLc4Cer(d18:1(4E)) + GDP-beta-L-fucose = a neolactoside IV(2)-alpha-Fuc-nLc4Cer(d18:1(4E)) + GDP + H(+). The catalysed reaction is a ganglioside GM1 + GDP-beta-L-fucose = a ganglioside Fuc-GM1 + GDP + H(+). The enzyme catalyses beta-D-galactosyl-(1-&gt;3)-N-acetyl-D-galactosamine + GDP-beta-L-fucose = alpha-L-fucosyl-(1-&gt;2)-beta-D-galactosyl-(1-&gt;3)-N-acetyl-D-galactosamine + GDP + H(+). Its pathway is protein modification; protein glycosylation. Catalyzes the transfer of L-fucose, from a guanosine diphosphate-beta-L-fucose, to the terminal galactose residue of glycoconjugates through an alpha(1,2) linkage leading to H antigen synthesis that is an intermediate substrate in the synthesis of ABO blood group antigens. H antigen is essential for maturation of the glomerular layer of the main olfactory bulb, in cell migration and early cell-cell contacts during tumor associated angiogenesis. Preferentially fucosylates soluble lactose and to a lesser extent fucosylates glycolipids gangliosides GA1 and GM1a. The protein is Galactoside alpha-(1,2)-fucosyltransferase 1 of Saimiri sciureus (Common squirrel monkey).